The chain runs to 110 residues: Histone H2A.1 (110 aa).

This sequence belongs to the histone H2A family. As to quaternary structure, the nucleosome is a histone octamer containing two molecules each of H2A, H2B, H3 and H4 assembled in one H3-H4 heterotetramer and two H2A-H2B heterodimers. The octamer wraps approximately 147 bp of DNA. Expressed in the generative cell within the bicellular pollen. Not detected in other reproductive or vegetative tissues.

The protein localises to the nucleus. The protein resides in the chromosome. Its function is as follows. Core component of nucleosome. Nucleosomes wrap and compact DNA into chromatin, limiting DNA accessibility to the cellular machineries which require DNA as a template. Histones thereby play a central role in transcription regulation, DNA repair, DNA replication and chromosomal stability. DNA accessibility is regulated via a complex set of post-translational modifications of histones, also called histone code, and nucleosome remodeling. The chain is Histone H2A.1 (gcH2A) from Lilium longiflorum (Trumpet lily).